Here is a 417-residue protein sequence, read N- to C-terminus: Tyrosine--tRNA ligase (417 aa).

Position 39 (tyrosine 39) interacts with L-tyrosine. The short motif at 44-53 (CTAPSLHVGH) is the 'HIGH' region element. Tyrosine 176 and glutamine 180 together coordinate L-tyrosine. The 'KMSKS' region signature appears at 236–240 (KMGKT). Lysine 239 serves as a coordination point for ATP. The 68-residue stretch at 350–417 (AGVLALFVKA…KKRHVLLRPA (68 aa)) folds into the S4 RNA-binding domain.

The protein belongs to the class-I aminoacyl-tRNA synthetase family. TyrS type 1 subfamily. As to quaternary structure, homodimer.

Its subcellular location is the cytoplasm. The catalysed reaction is tRNA(Tyr) + L-tyrosine + ATP = L-tyrosyl-tRNA(Tyr) + AMP + diphosphate + H(+). In terms of biological role, catalyzes the attachment of tyrosine to tRNA(Tyr) in a two-step reaction: tyrosine is first activated by ATP to form Tyr-AMP and then transferred to the acceptor end of tRNA(Tyr). This is Tyrosine--tRNA ligase from Nitrobacter winogradskyi (strain ATCC 25391 / DSM 10237 / CIP 104748 / NCIMB 11846 / Nb-255).